Reading from the N-terminus, the 440-residue chain is Gap junction gamma-2 protein (440 aa).

At 1–21 (MTNMSWSFLTRLLEEIHNHST) the chain is on the cytoplasmic side. The helical transmembrane segment at 22 to 42 (FVGKVWLTVLVVFRIVLTAVG) threads the bilayer. At 43-78 (GESIYSDEQSKFTCNTRQPGCDNVCYDAFAPLSHVR) the chain is on the extracellular side. A helical membrane pass occupies residues 79 to 99 (FWVFQIVVISTPSVMYLGYAV). The Cytoplasmic portion of the chain corresponds to 100-223 (HRLARASEQE…AQLVVRAAFE (124 aa)). Residues 108-199 (QERRRALRRR…TPGPAGQHDG (92 aa)) are disordered. The segment covering 112–124 (RALRRRPGPRRLP) has biased composition (basic residues). The segment covering 150–173 (LEEDEDEEPGAPEGPGEDTEEERT) has biased composition (acidic residues). Residues 224-244 (VAFLVGQYLLYGFEVPPFFAC) traverse the membrane as a helical segment. The Extracellular portion of the chain corresponds to 245–264 (SRQPCPHVVDCFVSRPTEKT). A helical transmembrane segment spans residues 265–285 (VFLLVMYVVSCLCLLLNLCEM). Residues 286–440 (AHLGLGSAQD…SRDGKATVWI (155 aa)) lie on the Cytoplasmic side of the membrane. The segment at 368–440 (ADRDSPPCSG…SRDGKATVWI (73 aa)) is disordered. Phosphoserine is present on Ser372. Residues 380-401 (ATSRGPPRAGGPASGTGSATSG) show a composition bias toward low complexity.

It belongs to the connexin family. Gamma-type subfamily. As to quaternary structure, a connexon is composed of a hexamer of connexins. Interacts with TJP1. In terms of tissue distribution, mainly expressed by oligodendrocytes in the central nervous system. Expressed in optic nerve (at protein level).

It is found in the cell membrane. The protein resides in the cell junction. The protein localises to the gap junction. Its function is as follows. One gap junction consists of a cluster of closely packed pairs of transmembrane channels, the connexons, through which materials of low MW diffuse from one cell to a neighboring cell. May play a role in myelination in central and peripheral nervous systems. The protein is Gap junction gamma-2 protein (Gjc2) of Rattus norvegicus (Rat).